The sequence spans 295 residues: tRNA dimethylallyltransferase (295 aa).

9–16 (GATATGKS) is an ATP binding site. Residue 11–16 (TATGKS) coordinates substrate. The interval 34-37 (DSRQ) is interaction with substrate tRNA.

Belongs to the IPP transferase family. As to quaternary structure, monomer. Requires Mg(2+) as cofactor.

The enzyme catalyses adenosine(37) in tRNA + dimethylallyl diphosphate = N(6)-dimethylallyladenosine(37) in tRNA + diphosphate. Functionally, catalyzes the transfer of a dimethylallyl group onto the adenine at position 37 in tRNAs that read codons beginning with uridine, leading to the formation of N6-(dimethylallyl)adenosine (i(6)A). This Nostoc sp. (strain PCC 7120 / SAG 25.82 / UTEX 2576) protein is tRNA dimethylallyltransferase.